The sequence spans 302 residues: MVSWPGLGTRVTVRYRRPAGSMPPLTDAVGRLLAVDPTVRVQTKTGTIVEFSPVDVVALRVLTDAPVRTAAIRALEHAAAAAWPGVERTWLDGWLLRAGHGAVLAANSAVPLDISAHTNTITEISAWYASRDLQPWLAVPDRLLPLPADLAGERREQVLVRDVSTGEPDRSVTLLDHPDDTWLRLYHQRLPLDMATPVIDGELAFGSYLGVAVARAAVTDAPDGTRWVGLSAMRAADEQSATGSAGRQLWEALLGWGAGRGATRGYVRVHDTATSVLAESLGFRLHHHCRYLPAQSVGWDTF.

The catalysed reaction is L-lysyl-[histone] + acetyl-CoA = N(6)-acetyl-L-lysyl-[histone] + CoA + H(+). In terms of biological role, shows histone acetyl transferase (HAT) activity with recombinant eukaryotic H3 histone expressed in bacteria as substrate and acetyl-CoA as donor. May be involved in survival under stress conditions. The chain is Probable histone acetyltransferase Rv0428c from Mycobacterium tuberculosis (strain ATCC 25618 / H37Rv).